The following is a 432-amino-acid chain: Glutamyl-tRNA reductase (432 aa).

Substrate contacts are provided by residues 55–58, S113, 118–120, and Q124; these read TCNR and EAQ. The Nucleophile role is filled by C56. An NADP(+)-binding site is contributed by 193 to 198; the sequence is GAGEMI.

This sequence belongs to the glutamyl-tRNA reductase family. As to quaternary structure, homodimer.

The catalysed reaction is (S)-4-amino-5-oxopentanoate + tRNA(Glu) + NADP(+) = L-glutamyl-tRNA(Glu) + NADPH + H(+). Its pathway is porphyrin-containing compound metabolism; protoporphyrin-IX biosynthesis; 5-aminolevulinate from L-glutamyl-tRNA(Glu): step 1/2. Catalyzes the NADPH-dependent reduction of glutamyl-tRNA(Glu) to glutamate 1-semialdehyde (GSA). This Paracidovorax citrulli (strain AAC00-1) (Acidovorax citrulli) protein is Glutamyl-tRNA reductase.